We begin with the raw amino-acid sequence, 299 residues long: Oxygen-dependent coproporphyrinogen-III oxidase (299 aa).

Substrate is bound at residue Ser92. A divalent metal cation is bound by residues His96 and His106. His106 acts as the Proton donor in catalysis. Substrate is bound at residue 108-110; the sequence is NVR. His145 and His175 together coordinate a divalent metal cation. Residues 240-275 form an important for dimerization region; that stretch reads YVEFNLVWDRGTLFGLQTGGRTESILMSMPPLVRWE. 258-260 contacts substrate; it reads GGR.

Belongs to the aerobic coproporphyrinogen-III oxidase family. In terms of assembly, homodimer. It depends on a divalent metal cation as a cofactor.

Its subcellular location is the cytoplasm. The enzyme catalyses coproporphyrinogen III + O2 + 2 H(+) = protoporphyrinogen IX + 2 CO2 + 2 H2O. It participates in porphyrin-containing compound metabolism; protoporphyrin-IX biosynthesis; protoporphyrinogen-IX from coproporphyrinogen-III (O2 route): step 1/1. Functionally, involved in the heme biosynthesis. Catalyzes the aerobic oxidative decarboxylation of propionate groups of rings A and B of coproporphyrinogen-III to yield the vinyl groups in protoporphyrinogen-IX. The chain is Oxygen-dependent coproporphyrinogen-III oxidase from Salmonella paratyphi B (strain ATCC BAA-1250 / SPB7).